Here is a 469-residue protein sequence, read N- to C-terminus: Sulfate adenylyltransferase subunit 1 (469 aa).

The tr-type G domain maps to 22–236 (KDMLRVLTCG…LLNTVSVEQD (215 aa)). Residues 31–38 (GSVDDGKS) are G1. GTP is bound at residue 31-38 (GSVDDGKS). The G2 stretch occupies residues 89 to 93 (GITID). Residues 110–113 (DTPG) form a G3 region. GTP contacts are provided by residues 110 to 114 (DTPGH) and 165 to 168 (NKMD). The interval 165-168 (NKMD) is G4. The tract at residues 202-204 (SAL) is G5.

Belongs to the TRAFAC class translation factor GTPase superfamily. Classic translation factor GTPase family. CysN/NodQ subfamily. Heterodimer composed of CysD, the smaller subunit, and CysN.

The catalysed reaction is sulfate + ATP + H(+) = adenosine 5'-phosphosulfate + diphosphate. It participates in sulfur metabolism; hydrogen sulfide biosynthesis; sulfite from sulfate: step 1/3. Its function is as follows. With CysD forms the ATP sulfurylase (ATPS) that catalyzes the adenylation of sulfate producing adenosine 5'-phosphosulfate (APS) and diphosphate, the first enzymatic step in sulfur assimilation pathway. APS synthesis involves the formation of a high-energy phosphoric-sulfuric acid anhydride bond driven by GTP hydrolysis by CysN coupled to ATP hydrolysis by CysD. In Shewanella woodyi (strain ATCC 51908 / MS32), this protein is Sulfate adenylyltransferase subunit 1.